Consider the following 272-residue polypeptide: Putative phosphoenolpyruvate synthase regulatory protein (272 aa).

Glycine 152–threonine 159 contacts ADP.

It belongs to the pyruvate, phosphate/water dikinase regulatory protein family. PSRP subfamily.

It catalyses the reaction [pyruvate, water dikinase] + ADP = [pyruvate, water dikinase]-phosphate + AMP + H(+). The enzyme catalyses [pyruvate, water dikinase]-phosphate + phosphate + H(+) = [pyruvate, water dikinase] + diphosphate. In terms of biological role, bifunctional serine/threonine kinase and phosphorylase involved in the regulation of the phosphoenolpyruvate synthase (PEPS) by catalyzing its phosphorylation/dephosphorylation. In Hahella chejuensis (strain KCTC 2396), this protein is Putative phosphoenolpyruvate synthase regulatory protein.